The sequence spans 525 residues: ATP synthase subunit alpha (525 aa).

169–176 lines the ATP pocket; the sequence is GDRQTGKT.

The protein belongs to the ATPase alpha/beta chains family. In terms of assembly, F-type ATPases have 2 components, CF(1) - the catalytic core - and CF(0) - the membrane proton channel. CF(1) has five subunits: alpha(3), beta(3), gamma(1), delta(1), epsilon(1). CF(0) has three main subunits: a(1), b(2) and c(9-12). The alpha and beta chains form an alternating ring which encloses part of the gamma chain. CF(1) is attached to CF(0) by a central stalk formed by the gamma and epsilon chains, while a peripheral stalk is formed by the delta and b chains.

It localises to the cell membrane. It carries out the reaction ATP + H2O + 4 H(+)(in) = ADP + phosphate + 5 H(+)(out). Its function is as follows. Produces ATP from ADP in the presence of a proton gradient across the membrane. The alpha chain is a regulatory subunit. In Mycoplasma mycoides subsp. mycoides SC (strain CCUG 32753 / NCTC 10114 / PG1), this protein is ATP synthase subunit alpha.